A 469-amino-acid polypeptide reads, in one-letter code: Glutamate--tRNA ligase 1 (469 aa).

Residues 10 to 20 carry the 'HIGH' region motif; the sequence is PSPTGYLHIGG. The Zn(2+) site is built by cysteine 99, cysteine 101, cysteine 126, and aspartate 128. The 'KMSKS' region motif lies at 237 to 241; sequence RLSKR. Lysine 240 contacts ATP.

It belongs to the class-I aminoacyl-tRNA synthetase family. Glutamate--tRNA ligase type 1 subfamily. As to quaternary structure, monomer. Zn(2+) is required as a cofactor.

It localises to the cytoplasm. The enzyme catalyses tRNA(Glu) + L-glutamate + ATP = L-glutamyl-tRNA(Glu) + AMP + diphosphate. In terms of biological role, catalyzes the attachment of glutamate to tRNA(Glu) in a two-step reaction: glutamate is first activated by ATP to form Glu-AMP and then transferred to the acceptor end of tRNA(Glu). The protein is Glutamate--tRNA ligase 1 of Coxiella burnetii (strain CbuK_Q154) (Coxiella burnetii (strain Q154)).